We begin with the raw amino-acid sequence, 327 residues long: MSLEEEILWAEKYRPRSLDDIVNQKDIVERLKRFVKDKNMPHLLFSGPPGTGKTTAALALVHDLYGDNYRQYFLELNASDERGIDVIRNKVKEFARTVAGGNVPFKVVLLDEADNMTADAQQALRRTMELYTETTRFILACNYLSKIIEPIQSRTALFRFYPLKKEDVVARLAYIAKNEKVEYDQKALETIYDITQGDMRKAINILQASSVYGKVTVEAVYKVLGLAQPKEIREMIMLALQGNFLKAREKLRELLVNYGLSGEDIIKQIHREVTGNEINIPDDLKVLLVDYIGEVEYRIMEGADDEIQLNALLAKLAVYGEKYLKGK.

47-54 (GPPGTGKT) is a binding site for ATP.

Belongs to the activator 1 small subunits family. RfcS subfamily. In terms of assembly, heteromultimer composed of small subunits (RfcS) and large subunits (RfcL).

Part of the RFC clamp loader complex which loads the PCNA sliding clamp onto DNA. This chain is Replication factor C small subunit, found in Sulfurisphaera tokodaii (strain DSM 16993 / JCM 10545 / NBRC 100140 / 7) (Sulfolobus tokodaii).